A 520-amino-acid polypeptide reads, in one-letter code: 2-isopropylmalate synthase (520 aa).

One can recognise a Pyruvate carboxyltransferase domain in the interval 12–274 (VIIFDTTLRD…WNKIDTTQLT (263 aa)). 4 residues coordinate Mn(2+): Asp-21, His-209, His-211, and Asn-245. The tract at residues 398–520 (KLTSLTVIAG…RDTVTTAAAS (123 aa)) is regulatory domain.

The protein belongs to the alpha-IPM synthase/homocitrate synthase family. LeuA type 1 subfamily. As to quaternary structure, homodimer. Mn(2+) serves as cofactor.

It localises to the cytoplasm. It carries out the reaction 3-methyl-2-oxobutanoate + acetyl-CoA + H2O = (2S)-2-isopropylmalate + CoA + H(+). Its pathway is amino-acid biosynthesis; L-leucine biosynthesis; L-leucine from 3-methyl-2-oxobutanoate: step 1/4. Functionally, catalyzes the condensation of the acetyl group of acetyl-CoA with 3-methyl-2-oxobutanoate (2-ketoisovalerate) to form 3-carboxy-3-hydroxy-4-methylpentanoate (2-isopropylmalate). The protein is 2-isopropylmalate synthase of Bradyrhizobium diazoefficiens (strain JCM 10833 / BCRC 13528 / IAM 13628 / NBRC 14792 / USDA 110).